Consider the following 438-residue polypeptide: Putative ZDHHC-type palmitoyltransferase 7 (438 aa).

N-linked (GlcNAc...) asparagine glycans are attached at residues Asn12 and Asn13. Helical transmembrane passes span 48–68 (IFCL…GTIL) and 77–97 (YFYL…YFLI). 3 N-linked (GlcNAc...) asparagine glycosylation sites follow: Asn119, Asn144, and Asn157. Residues 183 to 239 (EDSINDDTITTTTTTTTTTSTSTIPEISNDDDDNNNENNNDNVNNRNNNNSNGEKED) form a disordered region. Low complexity-rich tracts occupy residues 190 to 206 (TITT…TSTI) and 218 to 234 (NENN…NNSN). A glycan (N-linked (GlcNAc...) asparagine) is linked at Asn231. In terms of domain architecture, DHHC spans 249–299 (YFCKKCLVDIPLRTKHCVKCNRCVLKYDHHCVFIGGCVGLNNHKNFLLFLL). 2 helical membrane-spanning segments follow: residues 294 to 314 (FLLF…IIVT) and 330 to 350 (IAII…FALF). N-linked (GlcNAc...) asparagine glycosylation is present at Asn360.

The protein belongs to the DHHC palmitoyltransferase family.

The protein localises to the membrane. The enzyme catalyses L-cysteinyl-[protein] + hexadecanoyl-CoA = S-hexadecanoyl-L-cysteinyl-[protein] + CoA. The protein is Putative ZDHHC-type palmitoyltransferase 7 of Dictyostelium discoideum (Social amoeba).